The primary structure comprises 906 residues: Protein translocase subunit SecA (906 aa).

ATP contacts are provided by residues Q86, 104–108 (GEGKT), and D499. Residues 863–885 (PVVSRIDPKDRNPDDPTSWGRVS) are disordered. Positions 890, 892, 901, and 902 each coordinate Zn(2+).

This sequence belongs to the SecA family. In terms of assembly, monomer and homodimer. Part of the essential Sec protein translocation apparatus which comprises SecA, SecYEG and auxiliary proteins SecDF-YajC and YidC. The cofactor is Zn(2+).

Its subcellular location is the cell inner membrane. It is found in the cytoplasm. The enzyme catalyses ATP + H2O + cellular proteinSide 1 = ADP + phosphate + cellular proteinSide 2.. In terms of biological role, part of the Sec protein translocase complex. Interacts with the SecYEG preprotein conducting channel. Has a central role in coupling the hydrolysis of ATP to the transfer of proteins into and across the cell membrane, serving both as a receptor for the preprotein-SecB complex and as an ATP-driven molecular motor driving the stepwise translocation of polypeptide chains across the membrane. The protein is Protein translocase subunit SecA of Rickettsia akari (strain Hartford).